The primary structure comprises 126 residues: MKMLVFPVLAALFAVGLGNLVGAPRDINISEAQDALDFAVAKHNSGTNDMFLRQVAEVVRVQRQVVSGNKYIITVKMAKTPCRKDRVVNEVCEIHKDPALAQPYECTFSVWSRPWIPDLQLVGEKC.

The N-terminal stretch at 1-18 (MKMLVFPVLAALFAVGLG) is a signal peptide. The Cystatin domain occupies 22 to 115 (GAPRDINISE…CTFSVWSRPW (94 aa)). The Secondary area of contact signature appears at 64 to 68 (QVVSG). Disulfide bonds link Cys-82-Cys-92 and Cys-106-Cys-126.

The protein belongs to the cystatin family. In terms of tissue distribution, ubiquitously expressed in normal tissues including brain, eye, gill, heart, gullet, liver, spleen, stomach, pyloric ceca, intestine, kidney and muscle. Expressed, but not up-regulated, in lipopolysaccharide (LPS)-stimulated tissues including kidney, spleen, muscle and gill.

The protein resides in the secreted. Functionally, thiol protease inhibitor. Has high papain inhibitory activity and inhibits to a lesser extent fish cathepsins L, S, K, F, X and bovine cathepsin B in vitro. This Paralichthys olivaceus (Bastard halibut) protein is Cystatin-C.